We begin with the raw amino-acid sequence, 189 residues long: Auxin-responsive protein IAA6 (189 aa).

The short motif at 13–17 is the EAR-like (transcriptional repression) element; it reads LRLGL. One can recognise a PB1 domain in the interval 93–178; that stretch reads IGYVKVSMDG…SCKRLRIVKR (86 aa).

It belongs to the Aux/IAA family. As to quaternary structure, homodimers and heterodimers. Interacts with TPL. In terms of tissue distribution, highly expressed in stems and flowers.

It localises to the nucleus. In terms of biological role, aux/IAA proteins are short-lived transcriptional factors that function as repressors of early auxin response genes at low auxin concentrations. Repression is thought to result from the interaction with auxin response factors (ARFs), proteins that bind to the auxin-responsive promoter element (AuxRE). Formation of heterodimers with ARF proteins may alter their ability to modulate early auxin response genes expression. In Arabidopsis thaliana (Mouse-ear cress), this protein is Auxin-responsive protein IAA6 (IAA6).